The following is a 239-amino-acid chain: LexA repressor (239 aa).

Residues 27-47 (FDEMKDALDLASKSGIHRLIT) constitute a DNA-binding region (H-T-H motif). Active-site for autocatalytic cleavage activity residues include Ser159 and Lys197.

It belongs to the peptidase S24 family. As to quaternary structure, homodimer.

The catalysed reaction is Hydrolysis of Ala-|-Gly bond in repressor LexA.. In terms of biological role, represses a number of genes involved in the response to DNA damage (SOS response), including recA and lexA. In the presence of single-stranded DNA, RecA interacts with LexA causing an autocatalytic cleavage which disrupts the DNA-binding part of LexA, leading to derepression of the SOS regulon and eventually DNA repair. The chain is LexA repressor from Rhizobium radiobacter (Agrobacterium tumefaciens).